A 157-amino-acid polypeptide reads, in one-letter code: E3 ubiquitin-protein ligase RHA1B (157 aa).

Residues 85–129 form an RING-type; atypical zinc finger; the sequence is CTVCLSDFVSDDKIRQLPKCGHVFHHRCLDRWIVDCNKITCPICR.

The catalysed reaction is S-ubiquitinyl-[E2 ubiquitin-conjugating enzyme]-L-cysteine + [acceptor protein]-L-lysine = [E2 ubiquitin-conjugating enzyme]-L-cysteine + N(6)-ubiquitinyl-[acceptor protein]-L-lysine.. Its pathway is protein modification; protein ubiquitination. Its function is as follows. Possesses E3 ubiquitin-protein ligase activity when associated with the E2 enzyme UBC8 in vitro. The protein is E3 ubiquitin-protein ligase RHA1B of Arabidopsis thaliana (Mouse-ear cress).